The following is a 256-amino-acid chain: Metallo-beta-lactamase type 2 (256 aa).

Residues 1–29 form the signal peptide; the sequence is MKNTLLKLGVCVSLLGITPFVSTISSVQA. 5 residues coordinate Zn(2+): histidine 115, histidine 117, aspartate 119, histidine 178, and cysteine 197. Positions 200 and 209 each coordinate substrate. Histidine 239 lines the Zn(2+) pocket.

This sequence belongs to the metallo-beta-lactamase superfamily. Class-B beta-lactamase family. As to quaternary structure, monomer. Zn(2+) serves as cofactor.

The protein localises to the periplasm. The enzyme catalyses a beta-lactam + H2O = a substituted beta-amino acid. With respect to regulation, inhibited by chelating agents such as EDTA. In terms of biological role, confers resistance to the different beta-lactams antibiotics (penicillin, cephalosporin and carbapenem) via the hydrolysis of the beta-lactam ring. Benzylpenicillin is a better substrate than cephalosporin C and ampicillin. This chain is Metallo-beta-lactamase type 2, found in Bacillus cereus.